The primary structure comprises 243 residues: Venom protease (243 aa).

The region spanning 1–243 (VVGGKPAKLG…DSFILPALKK (243 aa)) is the Peptidase S1 domain. Cys34 and Cys50 are joined by a disulfide. Catalysis depends on charge relay system residues His49 and Asp97. Disulfide bonds link Cys165/Cys178 and Cys189/Cys217. Catalysis depends on Ser193, which acts as the Charge relay system.

Belongs to the peptidase S1 family. In terms of tissue distribution, expressed by the venom duct.

The protein resides in the secreted. The polypeptide is Venom protease (Bombus pensylvanicus (American bumblebee)).